Here is a 176-residue protein sequence, read N- to C-terminus: Adenine phosphoribosyltransferase (176 aa).

Belongs to the purine/pyrimidine phosphoribosyltransferase family. Homodimer.

It is found in the cytoplasm. The enzyme catalyses AMP + diphosphate = 5-phospho-alpha-D-ribose 1-diphosphate + adenine. Its pathway is purine metabolism; AMP biosynthesis via salvage pathway; AMP from adenine: step 1/1. Functionally, catalyzes a salvage reaction resulting in the formation of AMP, that is energically less costly than de novo synthesis. This chain is Adenine phosphoribosyltransferase, found in Bacteroides thetaiotaomicron (strain ATCC 29148 / DSM 2079 / JCM 5827 / CCUG 10774 / NCTC 10582 / VPI-5482 / E50).